The primary structure comprises 592 residues: Colicin-A (592 aa).

2 stretches are compositionally biased toward gly residues: residues 1 to 13 (MPGF…GDGT) and 23 to 34 (PEPGGGSHGNSG). 2 disordered regions span residues 1–57 (MPGF…PGDS) and 373–395 (RQRQ…KAKD). 2 helical membrane-spanning segments follow: residues 528–548 (WVLS…TLGA) and 555–575 (VPAI…GALI).

Belongs to the channel forming colicin family.

The protein resides in the cell membrane. Its function is as follows. This colicin is a channel-forming colicin. This class of transmembrane toxins depolarize the cytoplasmic membrane, leading to dissipation of cellular energy. Colicins are polypeptide toxins produced by and active against E.coli and closely related bacteria. The sequence is that of Colicin-A (caa) from Citrobacter freundii.